A 208-amino-acid polypeptide reads, in one-letter code: Ribonuclease HII (208 aa).

One can recognise an RNase H type-2 domain in the interval 12 to 201 (ELVAGVDEVG…VRALLEPVAV (190 aa)). Residues Asp18, Glu19, and Asp110 each coordinate a divalent metal cation.

This sequence belongs to the RNase HII family. The cofactor is Mn(2+). Requires Mg(2+) as cofactor.

It is found in the cytoplasm. It catalyses the reaction Endonucleolytic cleavage to 5'-phosphomonoester.. Functionally, endonuclease that specifically degrades the RNA of RNA-DNA hybrids. This chain is Ribonuclease HII, found in Ectopseudomonas mendocina (strain ymp) (Pseudomonas mendocina).